The primary structure comprises 261 residues: MNDEESHISVLPVMNKQTSLVLQNLKEETENQLKELEKKRSQLHKEEQINLQLVYAINDLRSKTKELKAENEKEDTFLNSFNASGDLTANKKIQLREQSRKLEESLLSYHKKVKEMEKQHRSASSKLELAKLSAQQLQTNVNVLRSQNNPEILQDMISETKDCRSLIAEQLLQSASLLNDFQNDSDRIAKNHSSLIDTSRAHRVSLTNATKNYTHIFDSLLTFTRHDSEDVSTSVEKLTSKKISELEKLFADYCSIEDAFD.

The stretch at 16 to 147 (KQTSLVLQNL…QTNVNVLRSQ (132 aa)) forms a coiled coil.

Its subcellular location is the cytoplasm. This is an uncharacterized protein from Schizosaccharomyces pombe (strain 972 / ATCC 24843) (Fission yeast).